Reading from the N-terminus, the 97-residue chain is DNA-directed RNA polymerase subunit omega (97 aa).

Residues methionine 1–leucine 16 show a composition bias toward polar residues. Residues methionine 1–glycine 21 form a disordered region.

The protein belongs to the RNA polymerase subunit omega family. As to quaternary structure, the RNAP catalytic core consists of 2 alpha, 1 beta, 1 beta' and 1 omega subunit. When a sigma factor is associated with the core the holoenzyme is formed, which can initiate transcription.

It catalyses the reaction RNA(n) + a ribonucleoside 5'-triphosphate = RNA(n+1) + diphosphate. Promotes RNA polymerase assembly. Latches the N- and C-terminal regions of the beta' subunit thereby facilitating its interaction with the beta and alpha subunits. The chain is DNA-directed RNA polymerase subunit omega from Saccharopolyspora erythraea (strain ATCC 11635 / DSM 40517 / JCM 4748 / NBRC 13426 / NCIMB 8594 / NRRL 2338).